A 250-amino-acid polypeptide reads, in one-letter code: Agamous-like MADS-box protein AGL9 homolog (250 aa).

Residues 3–57 (RGRVELKMIENKINRQVTFAKRRKRLLKKAYELSVLCDAEVALIIFSNRGKLYEF) enclose the MADS-box domain. Residues 87-177 (TQSSQQEYLK…KRRFEESSQA (91 aa)) enclose the K-box domain.

In terms of tissue distribution, expressed in petals and weakly in sepals but not in the column (gynostemium).

It localises to the nucleus. In terms of biological role, probable transcription factor active in inflorescence development and floral organogenesis. The chain is Agamous-like MADS-box protein AGL9 homolog from Aranda deborah (Orchid).